The following is a 128-amino-acid chain: Large ribosomal subunit protein bL19 (128 aa).

Belongs to the bacterial ribosomal protein bL19 family.

This protein is located at the 30S-50S ribosomal subunit interface and may play a role in the structure and function of the aminoacyl-tRNA binding site. The protein is Large ribosomal subunit protein bL19 of Paraburkholderia xenovorans (strain LB400).